A 366-amino-acid polypeptide reads, in one-letter code: NAD(P)H-quinone oxidoreductase subunit 1, chloroplastic (366 aa).

Transmembrane regions (helical) follow at residues 28–48, 105–125, 128–148, 250–270, 271–291, 303–323, and 346–366; these read IWLL…VLVI, IAVI…HLVL, LSIG…GLLM, SGIK…VSSL, FVTV…FIFI, IFGM…FLFI, and FLLP…LLSL.

Belongs to the complex I subunit 1 family. In terms of assembly, NDH is composed of at least 16 different subunits, 5 of which are encoded in the nucleus.

The protein localises to the plastid. Its subcellular location is the chloroplast thylakoid membrane. It catalyses the reaction a plastoquinone + NADH + (n+1) H(+)(in) = a plastoquinol + NAD(+) + n H(+)(out). It carries out the reaction a plastoquinone + NADPH + (n+1) H(+)(in) = a plastoquinol + NADP(+) + n H(+)(out). In terms of biological role, NDH shuttles electrons from NAD(P)H:plastoquinone, via FMN and iron-sulfur (Fe-S) centers, to quinones in the photosynthetic chain and possibly in a chloroplast respiratory chain. The immediate electron acceptor for the enzyme in this species is believed to be plastoquinone. Couples the redox reaction to proton translocation, and thus conserves the redox energy in a proton gradient. The polypeptide is NAD(P)H-quinone oxidoreductase subunit 1, chloroplastic (Nandina domestica (Heavenly bamboo)).